A 96-amino-acid polypeptide reads, in one-letter code: Small ribosomal subunit protein bS6 (96 aa).

This sequence belongs to the bacterial ribosomal protein bS6 family.

Its function is as follows. Binds together with bS18 to 16S ribosomal RNA. This chain is Small ribosomal subunit protein bS6, found in Bacillus mycoides (strain KBAB4) (Bacillus weihenstephanensis).